Here is a 318-residue protein sequence, read N- to C-terminus: N-acyl-aromatic-L-amino acid amidohydrolase (carboxylate-forming) (318 aa).

Residues 1 to 210 are hydrolytic domain; the sequence is MSSLPGSREP…ILDFIELFNQ (210 aa). Zn(2+)-binding residues include H21 and E24. Substrate is bound by residues R63 and 70–71; that span reads NR. Residue H116 participates in Zn(2+) binding. Positions 177 and 287 each coordinate substrate. Residues 211–318 are shielding domain; it reads GMDLPAFEMD…RLTPRSTQTP (108 aa). At T317 the chain carries Phosphothreonine.

It belongs to the AspA/AstE family. Aspartoacylase subfamily. Exists as a mixture of homodimers and homotetramer, both catalytically active. The cofactor is Zn(2+). In terms of tissue distribution, expressed predominantly in kidney and to a lesser extent in liver. Weakly expressed in heart, small intestine, brain, lung, testis, and stomach.

The protein resides in the apical cell membrane. The protein localises to the cytoplasm. The enzyme catalyses an N-acyl-aromatic L-alpha-amino acid + H2O = an aromatic L-alpha-amino acid + a carboxylate. It catalyses the reaction an N-acetyl-L-cysteine-S-conjugate + H2O = an S-substituted L-cysteine + acetate. Functionally, plays an important role in deacetylating mercapturic acids in kidney proximal tubules. Also acts on N-acetyl-aromatic amino acids. The protein is N-acyl-aromatic-L-amino acid amidohydrolase (carboxylate-forming) (Acy3) of Mus musculus (Mouse).